Here is a 318-residue protein sequence, read N- to C-terminus: Putative HTH-type transcriptional regulatory protein MJ1164 (318 aa).

Positions 131-189 (LKEVREAMGISVGKLAEVAGVSRKAIYKYETQMANPSVDVALKIEEFLDVPLVKGIDLF) constitute an HTH cro/C1-type domain. The segment at residues 142–161 (VGKLAEVAGVSRKAIYKYET) is a DNA-binding region (H-T-H motif).

The polypeptide is Putative HTH-type transcriptional regulatory protein MJ1164 (Methanocaldococcus jannaschii (strain ATCC 43067 / DSM 2661 / JAL-1 / JCM 10045 / NBRC 100440) (Methanococcus jannaschii)).